The primary structure comprises 56 residues: Small ribosomal subunit protein uS14 (56 aa).

Zn(2+) is bound by residues Cys21, Cys24, Cys39, and Cys42.

This sequence belongs to the universal ribosomal protein uS14 family. Requires Zn(2+) as cofactor.

In Guillardia theta (Cryptophyte), this protein is Small ribosomal subunit protein uS14 (rps29A).